The sequence spans 210 residues: Cell wall protein SRL1 (210 aa).

The first 19 residues, 1-19 (MLQSVVFFALLTFASSVSA), serve as a signal peptide directing secretion. The N-linked (GlcNAc...) asparagine glycan is linked to Asn23. Disordered stretches follow at residues 80–99 (SLSTSSASGSVTPESTHEIT) and 118–142 (LSPSSTAASVSDEDSNNKDAKVKSF). Positions 118-127 (LSPSSTAASV) are enriched in low complexity. Residues 132-141 (SNNKDAKVKS) are compositionally biased toward basic and acidic residues. 3 N-linked (GlcNAc...) asparagine glycosylation sites follow: Asn174, Asn200, and Asn206.

Its subcellular location is the secreted. It localises to the cell wall. It is found in the cell surface. Functionally, required to stabilize the cell wall in the absence of multiple GPI-anchored mannoproteins. The protein is Cell wall protein SRL1 (SRL1) of Saccharomyces cerevisiae (strain ATCC 204508 / S288c) (Baker's yeast).